The sequence spans 138 residues: NADH-quinone oxidoreductase subunit A 1 (138 aa).

3 helical membrane-spanning segments follow: residues Phe19 to Ala39, Phe74 to Trp94, and Leu103 to Leu123.

This sequence belongs to the complex I subunit 3 family. As to quaternary structure, NDH-1 is composed of 14 different subunits. Subunits NuoA, H, J, K, L, M, N constitute the membrane sector of the complex.

Its subcellular location is the cell inner membrane. It catalyses the reaction a quinone + NADH + 5 H(+)(in) = a quinol + NAD(+) + 4 H(+)(out). In terms of biological role, NDH-1 shuttles electrons from NADH, via FMN and iron-sulfur (Fe-S) centers, to quinones in the respiratory chain. The immediate electron acceptor for the enzyme in this species is believed to be ubiquinone. Couples the redox reaction to proton translocation (for every two electrons transferred, four hydrogen ions are translocated across the cytoplasmic membrane), and thus conserves the redox energy in a proton gradient. This chain is NADH-quinone oxidoreductase subunit A 1, found in Geobacter metallireducens (strain ATCC 53774 / DSM 7210 / GS-15).